The primary structure comprises 211 residues: MENTEKGTIIAISMAAFLFVVVSLSIIGYLISFTKREFKPRFINKKILIILFTVLGINLPIVILGFLFQFVINLSSTAPLIIMIVLAFGLTVGVGIYIFLFLQLIAVGIDEKEIAFLGERILIRKITRVERNDKTNQLVIYYIEGSRSKKKCRFSLASQAGQFMFNNVNLLNQEIMPFVDGQAEPELKVSEQENSEAPVSEPKEDEKTKKD.

Residues 187–211 (LKVSEQENSEAPVSEPKEDEKTKKD) form a disordered region. A compositionally biased stretch (basic and acidic residues) spans 201–211 (EPKEDEKTKKD).

This is an uncharacterized protein from Spiroplasma citri.